We begin with the raw amino-acid sequence, 884 residues long: Androgen receptor (884 aa).

The segment at 1–522 is modulating; it reads MEVQLGLGRV…PIDYYFPPQK (522 aa). The tract at residues 1–551 is interaction with ZNF318; that stretch reads MEVQLGLGRV…GSCKVFFKRA (551 aa). 2 disordered regions span residues 33–145 and 174–207; these read VIQN…TLSL and QQQQ…YLGG. Low complexity-rich tracts occupy residues 55–79 and 174–196; these read QQQQ…PQAQ and QQQQ…AAGA. The residue at position 61 (Ser-61) is a Phosphoserine; by CDK9. Ser-75 is subject to Phosphoserine. Residues 197-207 are compositionally biased toward polar residues; sequence PTSSKDSYLGG. At Tyr-204 the chain carries Phosphotyrosine; by CSK. Ser-237 is modified (phosphoserine). Position 248 is a phosphotyrosine; by CSK and TNK2 (Tyr-248). A disordered region spans residues 275–294; it reads DDSADKGTEEPAEYTPFKGS. Phosphotyrosine; by CSK occurs at positions 288, 327, 338, and 343. Phosphotyrosine; by CSK and TNK2 is present on Tyr-344. Residue Lys-367 forms a Glycyl lysine isopeptide (Lys-Gly) (interchain with G-Cter in SUMO) linkage. Tyr-374 is modified (phosphotyrosine; by CSK). Residue Lys-485 forms a Glycyl lysine isopeptide (Lys-Gly) (interchain with G-Cter in SUMO) linkage. 2 positions are modified to phosphotyrosine; by CSK: Tyr-499 and Tyr-516. The segment at 516-883 is interaction with LPXN; that stretch reads YYFPPQKTCL…GKVKPIYFHT (368 aa). Residues 523–596 constitute a DNA-binding region (nuclear receptor); the sequence is TCLICGDEAS…AGMTLGARKL (74 aa). 2 consecutive NR C4-type zinc fingers follow at residues 524–544 and 560–584; these read CLIC…CGSC and CASR…LRKC. Residues 536 to 626 form an interaction with HIPK3 region; the sequence is YGALTCGSCK…TEESSQKLTV (91 aa). Residues 556-883 form an interaction with CCAR1 region; sequence QKYLCASRND…GKVKPIYFHT (328 aa). The interval 589–883 is interaction with KAT7; the sequence is MTLGARKLKK…GKVKPIYFHT (295 aa). Position 615 is a phosphoserine; by STK4/MST1 (Ser-615). The NR LBD domain maps to 633–864; sequence ECQPIFLNVL…DFPEMMAEII (232 aa). Residues Asn-670 and Arg-717 each contribute to the 17beta-hydroxy-5alpha-androstan-3-one site. Glycyl lysine isopeptide (Lys-Gly) (interchain with G-Cter in ubiquitin) cross-links involve residues Lys-810 and Lys-812. Thr-842 serves as a coordination point for 17beta-hydroxy-5alpha-androstan-3-one. Tyr-880 carries the post-translational modification Phosphotyrosine; by CSK.

It belongs to the nuclear hormone receptor family. NR3 subfamily. In terms of assembly, binds DNA as a homodimer. Part of a ternary complex containing AR, EFCAB6/DJBP and PARK7. Interacts with HIPK3 and NR0B2 in the presence of androgen. The ligand binding domain interacts with KAT7/HBO1 in the presence of dihydrotestosterone. Interacts with EFCAB6/DJBP, PQBP1, RANBP9, RBAK, SPDEF, SRA1, TGFB1I1 and RREB1. Interacts with ZMIZ1/ZIMP10 and ZMIZ2/ZMIP7 which both enhance its transactivation activity. Interacts with SLC30A9 and RAD54L2/ARIP4. Interacts with MACROD1 (via macro domain). Interacts via the ligand-binding domain with LXXLL and FXXLF motifs from NCOA1, NCOA2, NCOA3 and MAGEA11. Interacts (via nuclear receptor DNA binding domain and nuclear receptor ligand binding domain) with NCOA4. The AR N-terminal poly-Gln region binds Ran resulting in enhancement of AR-mediated transactivation. Ran-binding decreases as the poly-Gln length increases. Interacts with HIP1 (via coiled coil domain). Interacts (via ligand-binding domain) with TRIM68. Interacts with TNK2. Interacts with USP26. Interacts with RNF6. Interacts (regulated by RNF6 probably through polyubiquitination) with RNF14; regulates AR transcriptional activity. Interacts with PRMT2 and TRIM24. Interacts with RACK1. Interacts with RANBP10; this interaction enhances dihydrotestosterone-induced AR transcriptional activity. Interacts with PRPF6 in a hormone-independent way; this interaction enhances dihydrotestosterone-induced AR transcriptional activity. Interacts with STK4/MST1. Interacts with ZIPK/DAPK3. Interacts with LPXN. Interacts with MAK. Part of a complex containing AR, MAK and NCOA3. Interacts with CRY1. Interacts with CCAR1 and GATA2. Interacts with ZNF318. Interacts with BUD31. Interacts with ARID4A. Interacts with ARID4B. Interacts (via NR LBD domain) with ZBTB7A; the interaction is direct and androgen-dependent. Interacts with NCOR1. Interacts with NCOR2. Interacts with CRY2 in a ligand-dependent manner. Post-translationally, phosphorylated in prostate cancer cells in response to several growth factors including EGF. Phosphorylation is induced by c-Src kinase (CSK). Tyr-499 is one of the major phosphorylation sites and an increase in phosphorylation and Src kinase activity is associated with prostate cancer progression. Phosphorylation by TNK2 enhances the DNA-binding and transcriptional activity. Phosphorylation at Ser-61 by CDK9 regulates AR promoter selectivity and cell growth. Sumoylated on Lys-367 (major) and Lys-485. Ubiquitinated. Deubiquitinated by USP26. 'Lys-6' and 'Lys-27'-linked polyubiquitination by RNF6 modulates AR transcriptional activity and specificity. In terms of processing, palmitoylated by ZDHHC7 and ZDHHC21. Palmitoylation is required for plasma membrane targeting and for rapid intracellular signaling via ERK and AKT kinases and cAMP generation.

Its subcellular location is the nucleus. It is found in the cytoplasm. Functionally, steroid hormone receptors are ligand-activated transcription factors that regulate eukaryotic gene expression and affect cellular proliferation and differentiation in target tissues. Transcription factor activity is modulated by bound coactivator and corepressor proteins like ZBTB7A that recruits NCOR1 and NCOR2 to the androgen response elements/ARE on target genes, negatively regulating androgen receptor signaling and androgen-induced cell proliferation. Transcription activation is also down-regulated by NR0B2. Activated, but not phosphorylated, by HIPK3 and ZIPK/DAPK3. The protein is Androgen receptor (AR) of Eulemur fulvus collaris (Collared brown lemur).